Consider the following 1323-residue polypeptide: MLVYYGGSALSVQSKKKILELTVSGVSDLNAVYFYLIYTKSNSSLNCESLRPILSDLQESEFKPDGTTMVYVFPRPGTISPWSSKATNIANVCGYKDVIRIERGIAYSVVFKDDISEEMLKSALNHLYDRMTEALRFKLPEEDEVFDKHEPAPLVRIELNCGQGGDKQAATERLNHANKKFGLALAPDEIDYLVECYTSEPSLKSREPTDVELFMFGQVNSEHCRHKIFNADWTIDGEKKDYSLFKMIRNTHLKNPQYTISAYSDNAAVFEGNSGTLFAPVNGIWSMKDEPVEFLGKVETHNHPTAVSPFPGAATGSGGEIRDEGAVGQGSLSKAGLAGYSVSDLNIPGYKQPWELDVGKPYHIATSLDIMLEAPIGSSAFNNEFGRPCINGYFRTFCMEVPRGDGTLEIRGYHKPIMAAGGIGRIRKQHAFKKSIAPGSPIIVLGGPALLVGLGGGAASSMNAGEGSEELDFASVQRGNPEMQRRAQMVIDACTTMDENIIQSIHDVGAGGVSNALPELVHDAGLGARFELRDIPCIEPSMSPMQIWCCESQERYVLSVKSEDLDTFKSICERERCPYGVVGYSTVEQRLILTDRLYNTTPIDLPMEVLFGKPPKMSRVAETQTIPLSKFDSSLKSYLAPSSDPILDAVERVLRMPAVASKSFLITIGDRSVTGLIARDQMVGPWQVPVADVGVTVTSYGKGINTGEALAMGEKPISALVSAAASARMAVAECIMNLVAASIPALDRIRLSANWMAAPSHPGEGAKLYEAVQAIGLELCPSLGISIPVGKDSMSMSMKWNEDGREKSVTAPLSLIITGFSPVDDLYSIWTPQLRKVEDIGSTSLIFIDLANGKQRLGGSILAQSYKQLGDEVPDLDNLDTFKNFINVITQLHKTNYIQAYHDKSDGGLFVTLSEMAFAGHVGIECELDSLSSDNIAALFNEELGAVIQVCDRDIAKVLELFAANGLSTCVHRIGKVLSGQAQTISFSRSGKIIFKSTRSKLHGIWHETSYKMQEIRDNPECARQEMENIADNNDPGLGYHLTFDPNVSVTADLALTSRPKVAILREQGVNGYLEMAYAFYASGFTAVDVHMTDILSGRVHLDDFVGIAACGGFSYGDVLGSGNGWATSILLHEDARNEFYRFFNERKDTFGLGICNGCQLFSRLKSLIPGAKSWPMFTFNESAQYEGRAVMLKIDETSGSKSIFTESMAGSSLPVVVAHGEGRAVFDSESDYEQFKKEGLDLIYYVNNYNERTSRYPFNPNGSRDAIAGVRSPCGRFLAMMPHPERVVLKVANSYYPHSKASEWGVHGPWIRLFQSARKWVG.

Residues 312–323 (GAATGSGGEIRD), 391–393 (NGY), and alanine 691 each bind ATP. The Mg(2+) site is built by aspartate 692, glutamate 733, asparagine 737, and aspartate 903. Position 905 (serine 905) interacts with ATP. The Glutamine amidotransferase type-1 domain maps to 1062-1306 (VAILREQGVN…YPHSKASEWG (245 aa)). Cysteine 1156 serves as the catalytic Nucleophile. Catalysis depends on residues histidine 1284 and glutamate 1286.

The protein in the N-terminal section; belongs to the FGAMS family.

The protein localises to the cytoplasm. It catalyses the reaction N(2)-formyl-N(1)-(5-phospho-beta-D-ribosyl)glycinamide + L-glutamine + ATP + H2O = 2-formamido-N(1)-(5-O-phospho-beta-D-ribosyl)acetamidine + L-glutamate + ADP + phosphate + H(+). The protein operates within purine metabolism; IMP biosynthesis via de novo pathway; 5-amino-1-(5-phospho-D-ribosyl)imidazole from N(2)-formyl-N(1)-(5-phospho-D-ribosyl)glycinamide: step 1/2. In terms of biological role, phosphoribosylformylglycinamidine synthase involved in the purines biosynthetic pathway. Catalyzes the ATP-dependent conversion of formylglycinamide ribonucleotide (FGAR) and glutamine to yield formylglycinamidine ribonucleotide (FGAM) and glutamate. In Schizosaccharomyces pombe (strain 972 / ATCC 24843) (Fission yeast), this protein is Phosphoribosylformylglycinamidine synthase (ade3).